The following is a 418-amino-acid chain: NADH-quinone oxidoreductase subunit D (418 aa).

This sequence belongs to the complex I 49 kDa subunit family. NDH-1 is composed of 14 different subunits. Subunits NuoB, C, D, E, F, and G constitute the peripheral sector of the complex.

It localises to the cell inner membrane. It carries out the reaction a quinone + NADH + 5 H(+)(in) = a quinol + NAD(+) + 4 H(+)(out). Its function is as follows. NDH-1 shuttles electrons from NADH, via FMN and iron-sulfur (Fe-S) centers, to quinones in the respiratory chain. The immediate electron acceptor for the enzyme in this species is believed to be ubiquinone. Couples the redox reaction to proton translocation (for every two electrons transferred, four hydrogen ions are translocated across the cytoplasmic membrane), and thus conserves the redox energy in a proton gradient. This chain is NADH-quinone oxidoreductase subunit D, found in Neisseria meningitidis serogroup A / serotype 4A (strain DSM 15465 / Z2491).